A 785-amino-acid polypeptide reads, in one-letter code: 5-methyltetrahydropteroyltriglutamate--homocysteine methyltransferase (785 aa).

5-methyltetrahydropteroyltri-L-glutamate contacts are provided by residues 15–18 and lysine 121; that span reads RELK. Residues 460–462 and glutamate 513 each bind L-homocysteine; that span reads IGS. L-methionine contacts are provided by residues 460–462 and glutamate 513; that span reads IGS. Residues 544 to 545 and tryptophan 590 each bind 5-methyltetrahydropteroyltri-L-glutamate; that span reads RC. Residue aspartate 628 participates in L-homocysteine binding. Aspartate 628 contacts L-methionine. Glutamate 634 is a 5-methyltetrahydropteroyltri-L-glutamate binding site. Residues histidine 670, cysteine 672, and glutamate 694 each coordinate Zn(2+). The active-site Proton donor is histidine 723. Position 755 (cysteine 755) interacts with Zn(2+).

It belongs to the vitamin-B12 independent methionine synthase family. Zn(2+) is required as a cofactor.

The catalysed reaction is 5-methyltetrahydropteroyltri-L-glutamate + L-homocysteine = tetrahydropteroyltri-L-glutamate + L-methionine. It participates in amino-acid biosynthesis; L-methionine biosynthesis via de novo pathway; L-methionine from L-homocysteine (MetE route): step 1/1. Its function is as follows. Catalyzes the transfer of a methyl group from 5-methyltetrahydrofolate to homocysteine resulting in methionine formation. The protein is 5-methyltetrahydropteroyltriglutamate--homocysteine methyltransferase of Nitratidesulfovibrio vulgaris (strain ATCC 29579 / DSM 644 / CCUG 34227 / NCIMB 8303 / VKM B-1760 / Hildenborough) (Desulfovibrio vulgaris).